The following is a 312-amino-acid chain: NAD(P)(+)--arginine ADP-ribosyltransferase 1 (312 aa).

The first 20 residues, 1–20 (MELLALRWVLLAGTLLSTSA), serve as a signal peptide directing secretion. A propeptide spanning residues 21–31 (ASSALQEGDLG) is cleaved from the precursor. 2 cysteine pairs are disulfide-bonded: C51–C260 and C159–C208. One can recognise a TR mART core domain in the interval 71-256 (IAYAVTWRQA…IQLHSKGKMS (186 aa)). Positions 108, 164, and 183 each coordinate NAD(+). Residue R164 is part of the active site. The active site involves S186. S217 serves as a coordination point for NAD(+). The active site involves E224. The propeptide occupies 267–312 (GGQWGRGHQEVGLGLSPGLSLPVLPCRRRVWEGLGHREGDPIPAAV).

This sequence belongs to the Arg-specific ADP-ribosyltransferase family.

The protein resides in the secreted. It localises to the extracellular space. The catalysed reaction is L-arginyl-[protein] + NAD(+) = N(omega)-(ADP-D-ribosyl)-L-arginyl-[protein] + nicotinamide + H(+). The protein is NAD(P)(+)--arginine ADP-ribosyltransferase 1 of Gallus gallus (Chicken).